The following is a 152-amino-acid chain: Cytochrome c oxidase subunit 5A, mitochondrial (152 aa).

The transit peptide at 1–43 (MLGTALRRCAVAAAAASRAGPRGLLHPAPAPGPAAAIQSIRCY) directs the protein to the mitochondrion. The SIFI-degron signature appears at 2–22 (LGTALRRCAVAAAAASRAGPR). N6-acetyllysine is present on residues K89 and K115. T143 carries the phosphothreonine modification.

This sequence belongs to the cytochrome c oxidase subunit 5A family. In terms of assembly, component of the cytochrome c oxidase (complex IV, CIV), a multisubunit enzyme composed of 14 subunits. The complex is composed of a catalytic core of 3 subunits MT-CO1, MT-CO2 and MT-CO3, encoded in the mitochondrial DNA, and 11 supernumerary subunits COX4I, COX5A, COX5B, COX6A, COX6B, COX6C, COX7A, COX7B, COX7C, COX8 and NDUFA4, which are encoded in the nuclear genome. The complex exists as a monomer or a dimer and forms supercomplexes (SCs) in the inner mitochondrial membrane with NADH-ubiquinone oxidoreductase (complex I, CI) and ubiquinol-cytochrome c oxidoreductase (cytochrome b-c1 complex, complex III, CIII), resulting in different assemblies (supercomplex SCI(1)III(2)IV(1) and megacomplex MCI(2)III(2)IV(2)). Interacts with AFG1L. Interacts with RAB5IF. In terms of processing, in response to mitochondrial stress, the precursor protein is ubiquitinated by the SIFI complex in the cytoplasm before mitochondrial import, leading to its degradation. Within the SIFI complex, UBR4 initiates ubiquitin chain that are further elongated or branched by KCMF1.

It is found in the mitochondrion inner membrane. It functions in the pathway energy metabolism; oxidative phosphorylation. Component of the cytochrome c oxidase, the last enzyme in the mitochondrial electron transport chain which drives oxidative phosphorylation. The respiratory chain contains 3 multisubunit complexes succinate dehydrogenase (complex II, CII), ubiquinol-cytochrome c oxidoreductase (cytochrome b-c1 complex, complex III, CIII) and cytochrome c oxidase (complex IV, CIV), that cooperate to transfer electrons derived from NADH and succinate to molecular oxygen, creating an electrochemical gradient over the inner membrane that drives transmembrane transport and the ATP synthase. Cytochrome c oxidase is the component of the respiratory chain that catalyzes the reduction of oxygen to water. Electrons originating from reduced cytochrome c in the intermembrane space (IMS) are transferred via the dinuclear copper A center (CU(A)) of subunit 2 and heme A of subunit 1 to the active site in subunit 1, a binuclear center (BNC) formed by heme A3 and copper B (CU(B)). The BNC reduces molecular oxygen to 2 water molecules using 4 electrons from cytochrome c in the IMS and 4 protons from the mitochondrial matrix. The protein is Cytochrome c oxidase subunit 5A, mitochondrial (COX5A) of Eulemur fulvus fulvus (Brown lemur).